The primary structure comprises 155 residues: Endoribonuclease YbeY (155 aa).

Zn(2+)-binding residues include histidine 120, histidine 124, and histidine 130.

It belongs to the endoribonuclease YbeY family. Requires Zn(2+) as cofactor.

The protein resides in the cytoplasm. Functionally, single strand-specific metallo-endoribonuclease involved in late-stage 70S ribosome quality control and in maturation of the 3' terminus of the 16S rRNA. The chain is Endoribonuclease YbeY from Staphylococcus aureus (strain Mu3 / ATCC 700698).